A 294-amino-acid chain; its full sequence is Transcription repressor OFP14 (294 aa).

Residues Ser49–Arg60 are compositionally biased toward basic residues. Disordered stretches follow at residues Ser49–Ser72, Asp96–Asp129, and Ala141–Thr185. Basic and acidic residues-rich tracts occupy residues Phe61–Ser72 and Asp96–Ser117. The span at Ser118–Asp128 shows a compositional bias: acidic residues. The segment covering Ser164–Thr185 has biased composition (low complexity). The region spanning Val195–Ala259 is the OVATE domain.

Interacts with KNAT2 and KNAT3. Expressed in roots, rosette and cauline leaves, shoots, stems, flower buds and siliques.

The protein localises to the nucleus. Functionally, transcriptional repressor that may regulate multiple aspects of plant growth and development through the regulation of BEL1-LIKE (BLH) and KNOX TALE (KNAT) homeodomain transcription factors. The chain is Transcription repressor OFP14 (OFP14) from Arabidopsis thaliana (Mouse-ear cress).